A 252-amino-acid polypeptide reads, in one-letter code: Carbohydrate deacetylase (252 aa).

2 residues coordinate Mg(2+): His-59 and His-122.

It belongs to the YdjC deacetylase family. In terms of assembly, homodimer. Requires Mg(2+) as cofactor.

Its function is as follows. Probably catalyzes the deacetylation of acetylated carbohydrates an important step in the degradation of oligosaccharides. This Vibrio vulnificus (strain YJ016) protein is Carbohydrate deacetylase.